A 161-amino-acid chain; its full sequence is 2-C-methyl-D-erythritol 2,4-cyclodiphosphate synthase (161 aa).

A divalent metal cation contacts are provided by D10 and H12. 4-CDP-2-C-methyl-D-erythritol 2-phosphate-binding positions include 10–12 (DVH) and 36–37 (HS). H44 contacts a divalent metal cation. 4-CDP-2-C-methyl-D-erythritol 2-phosphate is bound by residues 58–60 (DIG), 134–137 (TTTE), F141, and R144.

The protein belongs to the IspF family. Homotrimer. A divalent metal cation is required as a cofactor.

The catalysed reaction is 4-CDP-2-C-methyl-D-erythritol 2-phosphate = 2-C-methyl-D-erythritol 2,4-cyclic diphosphate + CMP. Its pathway is isoprenoid biosynthesis; isopentenyl diphosphate biosynthesis via DXP pathway; isopentenyl diphosphate from 1-deoxy-D-xylulose 5-phosphate: step 4/6. Its function is as follows. Involved in the biosynthesis of isopentenyl diphosphate (IPP) and dimethylallyl diphosphate (DMAPP), two major building blocks of isoprenoid compounds. Catalyzes the conversion of 4-diphosphocytidyl-2-C-methyl-D-erythritol 2-phosphate (CDP-ME2P) to 2-C-methyl-D-erythritol 2,4-cyclodiphosphate (ME-CPP) with a corresponding release of cytidine 5-monophosphate (CMP). The polypeptide is 2-C-methyl-D-erythritol 2,4-cyclodiphosphate synthase (Parabacteroides distasonis (strain ATCC 8503 / DSM 20701 / CIP 104284 / JCM 5825 / NCTC 11152)).